A 186-amino-acid chain; its full sequence is dTTP/UTP pyrophosphatase (186 aa).

Aspartate 70 functions as the Proton acceptor in the catalytic mechanism.

Belongs to the Maf family. YhdE subfamily. A divalent metal cation is required as a cofactor.

The protein resides in the cytoplasm. The enzyme catalyses dTTP + H2O = dTMP + diphosphate + H(+). It catalyses the reaction UTP + H2O = UMP + diphosphate + H(+). Nucleoside triphosphate pyrophosphatase that hydrolyzes dTTP and UTP. May have a dual role in cell division arrest and in preventing the incorporation of modified nucleotides into cellular nucleic acids. This is dTTP/UTP pyrophosphatase from Vibrio vulnificus (strain CMCP6).